Here is a 187-residue protein sequence, read N- to C-terminus: MSGGREIALLGGSFNPPHVAHLMAAWWALATQGVSEVWLLPTFRHPFGKDLAPFEDRLEMCRLAARALRGVHVCGAEAELAADPLVGKTARTLEHLAAKHPDHRFALIVGADILAETAKWYRWDRVQALARVIVVGRQGHPPVPGAPDLPAISSTEIRARLARGEDVRGLVPEKVLRYVEEKGLYRG.

Belongs to the NadD family.

It catalyses the reaction nicotinate beta-D-ribonucleotide + ATP + H(+) = deamido-NAD(+) + diphosphate. The protein operates within cofactor biosynthesis; NAD(+) biosynthesis; deamido-NAD(+) from nicotinate D-ribonucleotide: step 1/1. In terms of biological role, catalyzes the reversible adenylation of nicotinate mononucleotide (NaMN) to nicotinic acid adenine dinucleotide (NaAD). This chain is Probable nicotinate-nucleotide adenylyltransferase, found in Anaeromyxobacter sp. (strain K).